A 215-amino-acid polypeptide reads, in one-letter code: Uracil phosphoribosyltransferase (215 aa).

A GTP-binding site is contributed by 30–34 (KGMVR). 5-phospho-alpha-D-ribose 1-diphosphate-binding positions include arginine 80, arginine 105, and 139 to 147 (DPMIATAST). Residues isoleucine 202 and 207-209 (GDA) each bind uracil. Aspartate 208 serves as a coordination point for 5-phospho-alpha-D-ribose 1-diphosphate.

It belongs to the UPRTase family. Mg(2+) serves as cofactor.

The catalysed reaction is UMP + diphosphate = 5-phospho-alpha-D-ribose 1-diphosphate + uracil. Its pathway is pyrimidine metabolism; UMP biosynthesis via salvage pathway; UMP from uracil: step 1/1. With respect to regulation, allosterically activated by GTP. Its function is as follows. Catalyzes the conversion of uracil and 5-phospho-alpha-D-ribose 1-diphosphate (PRPP) to UMP and diphosphate. In Metallosphaera sedula (strain ATCC 51363 / DSM 5348 / JCM 9185 / NBRC 15509 / TH2), this protein is Uracil phosphoribosyltransferase.